Consider the following 220-residue polypeptide: 1-Cys peroxiredoxin B (220 aa).

The Thioredoxin domain maps to 4-165 (LTLGDVVPDL…VLRATDALLT (162 aa)). C46 (cysteine sulfenic acid (-SOH) intermediate) is an active-site residue. Residues 195-218 (KARFPAGFETAQLPSNKCYLRFTQ) carry the Bipartite nuclear localization signal motif.

This sequence belongs to the peroxiredoxin family. Prx6 subfamily.

It localises to the nucleus. Its subcellular location is the cytoplasm. It carries out the reaction a hydroperoxide + [thioredoxin]-dithiol = an alcohol + [thioredoxin]-disulfide + H2O. Thiol-specific peroxidase that catalyzes the reduction of hydrogen peroxide and organic hydroperoxides to water and alcohols, respectively. Seems to contribute to the inhibition of germination during stress. The polypeptide is 1-Cys peroxiredoxin B (Oryza sativa subsp. indica (Rice)).